The sequence spans 261 residues: Sulfur carrier protein FdhD (261 aa).

Cysteine 105 (cysteine persulfide intermediate) is an active-site residue. Position 245-250 (245-250) interacts with Mo-bis(molybdopterin guanine dinucleotide); the sequence is FIRGDR.

The protein belongs to the FdhD family.

It is found in the cytoplasm. Functionally, required for formate dehydrogenase (FDH) activity. Acts as a sulfur carrier protein that transfers sulfur from IscS to the molybdenum cofactor prior to its insertion into FDH. This Listeria monocytogenes serovar 1/2a (strain ATCC BAA-679 / EGD-e) protein is Sulfur carrier protein FdhD.